Here is a 71-residue protein sequence, read N- to C-terminus: uncharacterized protein (71 aa).

This is an uncharacterized protein from Thermoproteus tenax virus 1 (strain KRA1) (TTV1).